The chain runs to 451 residues: Serine--tRNA ligase (451 aa).

Residue 258-260 participates in L-serine binding; sequence TSE. 289-291 serves as a coordination point for ATP; sequence RSE. Glu-312 is a binding site for L-serine. 376-379 lines the ATP pocket; that stretch reads EISS. L-serine is bound at residue Ser-411.

It belongs to the class-II aminoacyl-tRNA synthetase family. Type-1 seryl-tRNA synthetase subfamily. Homodimer. The tRNA molecule binds across the dimer.

Its subcellular location is the cytoplasm. The enzyme catalyses tRNA(Ser) + L-serine + ATP = L-seryl-tRNA(Ser) + AMP + diphosphate + H(+). It catalyses the reaction tRNA(Sec) + L-serine + ATP = L-seryl-tRNA(Sec) + AMP + diphosphate + H(+). It participates in aminoacyl-tRNA biosynthesis; selenocysteinyl-tRNA(Sec) biosynthesis; L-seryl-tRNA(Sec) from L-serine and tRNA(Sec): step 1/1. Its function is as follows. Catalyzes the attachment of serine to tRNA(Ser). Is also able to aminoacylate tRNA(Sec) with serine, to form the misacylated tRNA L-seryl-tRNA(Sec), which will be further converted into selenocysteinyl-tRNA(Sec). The sequence is that of Serine--tRNA ligase from Bordetella pertussis (strain Tohama I / ATCC BAA-589 / NCTC 13251).